The following is a 652-amino-acid chain: Trypanothione synthetase (652 aa).

Residues 34–174 (SNKHDHFFSG…QHKDGVWTII (141 aa)) form the Peptidase C51 domain. An ATP-binding site is contributed by 328 to 330 (RFD). Residues D330, E344, and N346 each contribute to the Mg(2+) site. ATP is bound by residues K513, K548, G555, Q583, and 618–620 (IIT).

This sequence in the C-terminal section; belongs to the glutathionylspermidine synthase preATP-grasp family. The cofactor is Mg(2+). Post-translationally, the N-terminus is blocked.

It catalyses the reaction spermidine + glutathione + ATP = glutathionylspermidine + ADP + phosphate + H(+). The catalysed reaction is glutathionylspermidine + glutathione + ATP = trypanothione + ADP + phosphate + H(+). In terms of biological role, conjugates glutathione (gamma-Glu-Cys-Gly) and glutathionylspermidine to form trypanothione (N(1),N(8)-bis(glutathionyl)spermidine), which is involved in maintaining intracellular thiol redox and in defense against oxidants. The chain is Trypanothione synthetase (TRS) from Crithidia fasciculata.